A 345-amino-acid chain; its full sequence is Biotin synthase (345 aa).

The Radical SAM core domain maps to 66–291 (PEVEVEGIIS…RTMLRFAGGR (226 aa)). Cys-81, Cys-85, and Cys-88 together coordinate [4Fe-4S] cluster. Residues Cys-124, Cys-157, Cys-216, and Arg-286 each contribute to the [2Fe-2S] cluster site.

The protein belongs to the radical SAM superfamily. Biotin synthase family. As to quaternary structure, homodimer. The cofactor is [4Fe-4S] cluster. [2Fe-2S] cluster serves as cofactor.

The enzyme catalyses (4R,5S)-dethiobiotin + (sulfur carrier)-SH + 2 reduced [2Fe-2S]-[ferredoxin] + 2 S-adenosyl-L-methionine = (sulfur carrier)-H + biotin + 2 5'-deoxyadenosine + 2 L-methionine + 2 oxidized [2Fe-2S]-[ferredoxin]. It functions in the pathway cofactor biosynthesis; biotin biosynthesis; biotin from 7,8-diaminononanoate: step 2/2. Catalyzes the conversion of dethiobiotin (DTB) to biotin by the insertion of a sulfur atom into dethiobiotin via a radical-based mechanism. This Mycobacterium avium (strain 104) protein is Biotin synthase.